A 450-amino-acid chain; its full sequence is F-box/FBD/LRR-repeat protein At5g22660 (450 aa).

The 47-residue stretch at 12-58 (EDRISSLPDHLLSQILSNLPTENAVTTSILSTRWKDLWLSTPVLDID) folds into the F-box domain. 2 LRR repeats span residues 157–181 (LPNLKVMHLEENIYSYAETMEKFIS) and 294–317 (LSSLRDMTISGTTLKIICHYLKHE). An FBD domain is found at 364–416 (EEISLSSSVPKCLQSSLENVEIIRPNYGSGEEMKLSKYFLENSLVLKKFKLCR).

The polypeptide is F-box/FBD/LRR-repeat protein At5g22660 (Arabidopsis thaliana (Mouse-ear cress)).